The following is a 561-amino-acid chain: Cloacin (561 aa).

3 stretches are compositionally biased toward gly residues: residues 1-21 (MSGG…GGQA), 29-40 (SGKGGPSSGGGT), and 66-91 (FGNG…GGGQ). Disordered regions lie at residues 1-93 (MSGG…GQSS), 254-273 (PKGI…TAGG), 304-326 (VKQR…PEEG), 432-507 (KAAL…KRAR), and 530-561 (RASD…KKYL). The segment at 1-180 (MSGGDGRGPG…DTVTETPAST (180 aa)) is involved in the translocation of the protein across the cell membrane. Residues 200 to 420 (DERQHIAVVA…NAKLKAAQAS (221 aa)) are responsible for the receptor binding activity. Composition is skewed to basic and acidic residues over residues 306–326 (QRQE…PEEG) and 440–494 (ESRK…EGKP). Residues 421 to 561 (LNAMNDALSR…DPKRNIKKYL (141 aa)) form a ribonuclease activity region. The tract at residues 540-561 (FDPKTGKQVKGPDPKRNIKKYL) is binding of immunity protein.

The protein belongs to the cloacin colicin family.

Its function is as follows. Inactivates ribosomes by hydrolyzing 16S RNA in 30S ribosomes at a specific site. In terms of biological role, colicins are polypeptide toxins produced by and active against E.coli and closely related bacteria. The protein is Cloacin (ccl) of Escherichia coli.